A 280-amino-acid polypeptide reads, in one-letter code: Urease accessory protein UreD 3 (280 aa).

It belongs to the UreD family. As to quaternary structure, ureD, UreF and UreG form a complex that acts as a GTP-hydrolysis-dependent molecular chaperone, activating the urease apoprotein by helping to assemble the nickel containing metallocenter of UreC. The UreE protein probably delivers the nickel.

Its subcellular location is the cytoplasm. In terms of biological role, required for maturation of urease via the functional incorporation of the urease nickel metallocenter. The sequence is that of Urease accessory protein UreD 3 from Bradyrhizobium sp. (strain ORS 278).